The chain runs to 224 residues: Leucyl/phenylalanyl-tRNA--protein transferase (224 aa).

The protein belongs to the L/F-transferase family.

It localises to the cytoplasm. The catalysed reaction is N-terminal L-lysyl-[protein] + L-leucyl-tRNA(Leu) = N-terminal L-leucyl-L-lysyl-[protein] + tRNA(Leu) + H(+). It carries out the reaction N-terminal L-arginyl-[protein] + L-leucyl-tRNA(Leu) = N-terminal L-leucyl-L-arginyl-[protein] + tRNA(Leu) + H(+). The enzyme catalyses L-phenylalanyl-tRNA(Phe) + an N-terminal L-alpha-aminoacyl-[protein] = an N-terminal L-phenylalanyl-L-alpha-aminoacyl-[protein] + tRNA(Phe). Functionally, functions in the N-end rule pathway of protein degradation where it conjugates Leu, Phe and, less efficiently, Met from aminoacyl-tRNAs to the N-termini of proteins containing an N-terminal arginine or lysine. This chain is Leucyl/phenylalanyl-tRNA--protein transferase, found in Rhodopseudomonas palustris (strain HaA2).